The primary structure comprises 281 residues: Tetraspanin-33 (281 aa).

Residues 1 to 23 (MGNAKRATQNDEDYTFVSPVVKY) lie on the Cytoplasmic side of the membrane. Residues 24–44 (LLFFFNMIFWIISLVLISIGV) traverse the membrane as a helical segment. The Extracellular portion of the chain corresponds to 45–62 (YSRIVKHETALACLTVDP). The helical transmembrane segment at 63-83 (ALILMVVGILMFFITFCGCVG) threads the bilayer. Over 84–94 (SLRENICLLQT) the chain is Cytoplasmic. A helical membrane pass occupies residues 95 to 115 (FCIFLTIMFLLQLLAGVLGFV). Residues 116–233 (FSDKARGKVT…DILVNWIHSN (118 aa)) lie on the Extracellular side of the membrane. Intrachain disulfides connect cysteine 154/cysteine 222, cysteine 155/cysteine 187, cysteine 171/cysteine 181, and cysteine 188/cysteine 201. Asparagine 170 carries N-linked (GlcNAc...) asparagine glycosylation. Residues 234 to 254 (LFLLGGIALGLTIPQLVGILL) traverse the membrane as a helical segment. At 255-281 (SQVLINQIQDQIKLQNYNQQHRSDPWS) the chain is on the cytoplasmic side.

It belongs to the tetraspanin (TM4SF) family. In terms of assembly, homodimer; disulfide-linked.

It is found in the cell membrane. The protein resides in the cell junction. Its subcellular location is the adherens junction. The protein localises to the cytoplasm. In terms of biological role, part of TspanC8 subgroup, composed of 6 members that interact with the transmembrane metalloprotease ADAM10. This interaction is required for ADAM10 exit from the endoplasmic reticulum and for enzymatic maturation and trafficking to the cell surface as well as substrate specificity. Different TspanC8/ADAM10 complexes have distinct substrates. This is Tetraspanin-33 (tspan33) from Danio rerio (Zebrafish).